Consider the following 1419-residue polypeptide: DNA-directed RNA polymerase subunit beta' (1419 aa).

Cys-71, Cys-73, Cys-86, and Cys-89 together coordinate Zn(2+). Asp-461, Asp-463, and Asp-465 together coordinate Mg(2+). Positions 815, 889, 896, and 899 each coordinate Zn(2+).

Belongs to the RNA polymerase beta' chain family. As to quaternary structure, the RNAP catalytic core consists of 2 alpha, 1 beta, 1 beta' and 1 omega subunit. When a sigma factor is associated with the core the holoenzyme is formed, which can initiate transcription. Mg(2+) serves as cofactor. Requires Zn(2+) as cofactor.

The enzyme catalyses RNA(n) + a ribonucleoside 5'-triphosphate = RNA(n+1) + diphosphate. DNA-dependent RNA polymerase catalyzes the transcription of DNA into RNA using the four ribonucleoside triphosphates as substrates. This chain is DNA-directed RNA polymerase subunit beta', found in Actinobacillus succinogenes (strain ATCC 55618 / DSM 22257 / CCUG 43843 / 130Z).